The chain runs to 147 residues: Lysozyme C (147 aa).

The N-terminal stretch at 1–18 is a signal peptide; it reads MKALVILGFLFLSVAVQG. Residues 19–147 enclose the C-type lysozyme domain; the sequence is KVFERCELAR…VSSYVEGCTL (129 aa). 4 disulfides stabilise this stretch: Cys24/Cys145, Cys48/Cys133, Cys83/Cys99, and Cys95/Cys113. Residues Glu53 and Asp71 contribute to the active site.

The protein belongs to the glycosyl hydrolase 22 family. Monomer. As to expression, stomach-specific.

It carries out the reaction Hydrolysis of (1-&gt;4)-beta-linkages between N-acetylmuramic acid and N-acetyl-D-glucosamine residues in a peptidoglycan and between N-acetyl-D-glucosamine residues in chitodextrins.. Its function is as follows. Lysozymes have primarily a bacteriolytic function; those in tissues and body fluids are associated with the monocyte-macrophage system and enhance the activity of immunoagents. The chain is Lysozyme C (LYZ1) from Bos taurus (Bovine).